The chain runs to 192 residues: Ion-translocating oxidoreductase complex subunit A (192 aa).

A run of 6 helical transmembrane segments spans residues 5–25 (LLLLIGTVLVNNFVLVKFLGL), 39–59 (IGMSMATTFVLTLASILSYLV), 65–85 (LPFDLGYLRTMSFILVIAVVV), 102–122 (ALGIYLPLITTNCAVLGVALL), 134–154 (AIFGFGAAVGFSLVLILFSAM), and 171–191 (AIAMVTAGLMSLAFMGFTGLV).

This sequence belongs to the NqrDE/RnfAE family. In terms of assembly, the complex is composed of six subunits: RnfA, RnfB, RnfC, RnfD, RnfE and RnfG.

Its subcellular location is the cell inner membrane. Its function is as follows. Part of a membrane-bound complex that couples electron transfer with translocation of ions across the membrane. The polypeptide is Ion-translocating oxidoreductase complex subunit A (Shewanella pealeana (strain ATCC 700345 / ANG-SQ1)).